Here is a 1033-residue protein sequence, read N- to C-terminus: Error-prone DNA polymerase (1033 aa).

The protein belongs to the DNA polymerase type-C family. DnaE2 subfamily.

It localises to the cytoplasm. The enzyme catalyses DNA(n) + a 2'-deoxyribonucleoside 5'-triphosphate = DNA(n+1) + diphosphate. Functionally, DNA polymerase involved in damage-induced mutagenesis and translesion synthesis (TLS). It is not the major replicative DNA polymerase. This is Error-prone DNA polymerase from Teredinibacter turnerae (strain ATCC 39867 / T7901).